Reading from the N-terminus, the 471-residue chain is Glutamate--tRNA ligase (471 aa).

The short motif at 9–19 (PSPTGYLHVGG) is the 'HIGH' region element. Residues cysteine 98, cysteine 100, cysteine 125, and histidine 127 each contribute to the Zn(2+) site. The 'KMSKS' region motif lies at 237 to 241 (KLSKR). Residue lysine 240 participates in ATP binding.

Belongs to the class-I aminoacyl-tRNA synthetase family. Glutamate--tRNA ligase type 1 subfamily. Monomer. Zn(2+) serves as cofactor.

The protein resides in the cytoplasm. It catalyses the reaction tRNA(Glu) + L-glutamate + ATP = L-glutamyl-tRNA(Glu) + AMP + diphosphate. Its function is as follows. Catalyzes the attachment of glutamate to tRNA(Glu) in a two-step reaction: glutamate is first activated by ATP to form Glu-AMP and then transferred to the acceptor end of tRNA(Glu). This Shigella sonnei (strain Ss046) protein is Glutamate--tRNA ligase.